Here is a 97-residue protein sequence, read N- to C-terminus: Integration host factor subunit beta (97 aa).

It belongs to the bacterial histone-like protein family. In terms of assembly, heterodimer of an alpha and a beta chain.

Its function is as follows. This protein is one of the two subunits of integration host factor, a specific DNA-binding protein that functions in genetic recombination as well as in transcriptional and translational control. This Buchnera aphidicola subsp. Cinara cedri (strain Cc) protein is Integration host factor subunit beta.